Reading from the N-terminus, the 309-residue chain is Sulfate adenylyltransferase subunit 2 (309 aa).

It belongs to the PAPS reductase family. CysD subfamily. In terms of assembly, heterodimer composed of CysD, the smaller subunit, and CysN.

The enzyme catalyses sulfate + ATP + H(+) = adenosine 5'-phosphosulfate + diphosphate. It functions in the pathway sulfur metabolism; hydrogen sulfide biosynthesis; sulfite from sulfate: step 1/3. With CysN forms the ATP sulfurylase (ATPS) that catalyzes the adenylation of sulfate producing adenosine 5'-phosphosulfate (APS) and diphosphate, the first enzymatic step in sulfur assimilation pathway. APS synthesis involves the formation of a high-energy phosphoric-sulfuric acid anhydride bond driven by GTP hydrolysis by CysN coupled to ATP hydrolysis by CysD. This chain is Sulfate adenylyltransferase subunit 2, found in Mycolicibacterium vanbaalenii (strain DSM 7251 / JCM 13017 / BCRC 16820 / KCTC 9966 / NRRL B-24157 / PYR-1) (Mycobacterium vanbaalenii).